The primary structure comprises 236 residues: MGQKINPIGLRLGVNRTWDSRWYADSGEYGRLLHEDLKIRLYVLEELKQAAVSKIVIERPHKKCRVTIYSARPGLIIGKKGADIEKLRRKLSEMTNAETSLNIVEIHKPEIDATIIAQSIAQQLERRVAFRRAMKRAVQSALRLGAEGIRINCSGRLGGAEIARMEWYREGRVPLHTLRSDVDYGTAEAKTAYGICGVKVWVFKGEILEYDPMASERRAAEVDHSGSSSNRRRENA.

The KH type-2 domain maps to 39-107 (IRLYVLEELK…ETSLNIVEIH (69 aa)). The disordered stretch occupies residues 216-236 (ERRAAEVDHSGSSSNRRRENA).

This sequence belongs to the universal ribosomal protein uS3 family. Part of the 30S ribosomal subunit. Forms a tight complex with proteins S10 and S14.

Binds the lower part of the 30S subunit head. Binds mRNA in the 70S ribosome, positioning it for translation. This is Small ribosomal subunit protein uS3 from Bartonella henselae (strain ATCC 49882 / DSM 28221 / CCUG 30454 / Houston 1) (Rochalimaea henselae).